The primary structure comprises 536 residues: MAAAAAAMATATSATAAPPLRIRDAARRTRRRGHVRCAVASGAAEAPAAPGARVSADCVVVGGGISGLCTAQALATKHGVGDVLVTEARARPGGNITTAERAGEGYLWEEGPNSFQPSDPVLTMAVDSGLKDDLVFGDPNAPRFVLWEGKLRPVPSKPGDLPFFDLMSIPGKLRAGLGALGVRAPPPGREESVEDFVRRNLGAEVFERLIEPFCSGVYAGDPSKLSMKAAFGKVWRLEDTGGSIIGGTIKTIQERGKNPKPPRDPRLPTPKGQTVASFRKGLTMLPDAITSRLGSKVKLSWKLTSITKSDNKGYALVYETPEGVVSVQAKTVVMTIPSYVASDILRPLSSDAADALSIFYYPPVAAVTVSYPKEAIRKECLIDGELQGFGQLHPRSQGVETLGTIYSSSLFPNRAPAGRVLLLNYIGGSTNTGIVSKTESELVEAVDRDLRKMLINPKAVDPLVLGVRVWPQAIPQFLIGHLDHLEAAKSALGKGGYDGLFLGGNYVAGVALGRCVEGAYESASQISDYLTKYAYK.

Residues 1 to 36 (MAAAAAAMATATSATAAPPLRIRDAARRTRRRGHVR) constitute a chloroplast transit peptide. FAD is bound by residues 62 to 67 (GGGISG), 87 to 88 (EA), and 111 to 114 (GPNS). Residues 248-272 (TIKTIQERGKNPKPPRDPRLPTPKG) form a disordered region. The span at 252 to 266 (IQERGKNPKPPRDPR) shows a compositional bias: basic and acidic residues. 510–512 (VAL) serves as a coordination point for FAD.

This sequence belongs to the protoporphyrinogen/coproporphyrinogen oxidase family. Protoporphyrinogen oxidase subfamily. Requires FAD as cofactor.

Its subcellular location is the plastid. It is found in the chloroplast. It carries out the reaction protoporphyrinogen IX + 3 O2 = protoporphyrin IX + 3 H2O2. It functions in the pathway porphyrin-containing compound metabolism; protoporphyrin-IX biosynthesis; protoporphyrin-IX from protoporphyrinogen-IX: step 1/1. Its pathway is porphyrin-containing compound metabolism; chlorophyll biosynthesis. Its function is as follows. Catalyzes the 6-electron oxidation of protoporphyrinogen-IX to form protoporphyrin-IX. This is Protoporphyrinogen oxidase, chloroplastic (PPOX1) from Oryza sativa subsp. japonica (Rice).